Here is a 284-residue protein sequence, read N- to C-terminus: RNase adapter protein RapZ (284 aa).

8 to 15 contributes to the ATP binding site; sequence GRSGSGKS. A GTP-binding site is contributed by 56–59; the sequence is DVRN. The RNA-binding stretch occupies residues 266–284; that stretch reads RSRGKNVQSRHRTLEKRKP.

Belongs to the RapZ-like family. RapZ subfamily. In terms of assembly, homotrimer.

Its function is as follows. Modulates the synthesis of GlmS, by affecting the processing and stability of the regulatory small RNA GlmZ. When glucosamine-6-phosphate (GlcN6P) concentrations are high in the cell, RapZ binds GlmZ and targets it to cleavage by RNase E. Consequently, GlmZ is inactivated and unable to activate GlmS synthesis. Under low GlcN6P concentrations, RapZ is sequestered and inactivated by an other regulatory small RNA, GlmY, preventing GlmZ degradation and leading to synthesis of GlmS. This is RNase adapter protein RapZ from Shigella boydii serotype 18 (strain CDC 3083-94 / BS512).